Here is a 177-residue protein sequence, read N- to C-terminus: NADH-quinone oxidoreductase subunit B (177 aa).

[4Fe-4S] cluster contacts are provided by C56, C57, C121, and C151.

Belongs to the complex I 20 kDa subunit family. As to quaternary structure, NDH-1 is composed of 14 different subunits. Subunits NuoB, C, D, E, F, and G constitute the peripheral sector of the complex. The cofactor is [4Fe-4S] cluster.

The protein resides in the cell inner membrane. It catalyses the reaction a quinone + NADH + 5 H(+)(in) = a quinol + NAD(+) + 4 H(+)(out). Functionally, NDH-1 shuttles electrons from NADH, via FMN and iron-sulfur (Fe-S) centers, to quinones in the respiratory chain. Couples the redox reaction to proton translocation (for every two electrons transferred, four hydrogen ions are translocated across the cytoplasmic membrane), and thus conserves the redox energy in a proton gradient. In Sphingopyxis alaskensis (strain DSM 13593 / LMG 18877 / RB2256) (Sphingomonas alaskensis), this protein is NADH-quinone oxidoreductase subunit B.